A 565-amino-acid chain; its full sequence is Phosphomethylpyrimidine synthase (565 aa).

Substrate contacts are provided by residues asparagine 203, methionine 232, tyrosine 261, histidine 297, 317–319, 358–361, and glutamate 397; these read SRG and DGLR. A Zn(2+)-binding site is contributed by histidine 401. Tyrosine 424 contributes to the substrate binding site. Histidine 465 is a Zn(2+) binding site. Positions 541, 544, and 549 each coordinate [4Fe-4S] cluster.

Belongs to the ThiC family. [4Fe-4S] cluster is required as a cofactor.

The enzyme catalyses 5-amino-1-(5-phospho-beta-D-ribosyl)imidazole + S-adenosyl-L-methionine = 4-amino-2-methyl-5-(phosphooxymethyl)pyrimidine + CO + 5'-deoxyadenosine + formate + L-methionine + 3 H(+). The protein operates within cofactor biosynthesis; thiamine diphosphate biosynthesis. Functionally, catalyzes the synthesis of the hydroxymethylpyrimidine phosphate (HMP-P) moiety of thiamine from aminoimidazole ribotide (AIR) in a radical S-adenosyl-L-methionine (SAM)-dependent reaction. The chain is Phosphomethylpyrimidine synthase from Bacteroides thetaiotaomicron (strain ATCC 29148 / DSM 2079 / JCM 5827 / CCUG 10774 / NCTC 10582 / VPI-5482 / E50).